The primary structure comprises 590 residues: Dystrobrevin-1 (590 aa).

The span at 1 to 10 (MLWSNGGGGP) shows a compositional bias: gly residues. Residues 1 to 25 (MLWSNGGGGPREPSSAPSPDHHRAM) form a disordered region. The segment at 259-315 (YHPVVCDACQVRSFTGFRYKCQRCANYQLCQSCFWRGRTSQNHSNEHEMKEYSSYKS) adopts a ZZ-type zinc-finger fold. Cys-264, Cys-267, Cys-279, Cys-282, Cys-288, Cys-291, His-301, and His-305 together coordinate Zn(2+). Residues 434 to 508 (SMVGDERTLI…EHLMAQLNTG (75 aa)) are a coiled coil. The interval 468 to 590 (DGLAGLRDRK…DENGVTINGF (123 aa)) is essential for interaction with ctn-1. The segment at 484–490 (MFEMQQR) is essential for interaction with dys-1.

It belongs to the dystrophin family. Dystrobrevin subfamily. As to quaternary structure, component of the dystrophin glycoprotein complex (DGC). Interacts with dystrophin (dys-1) and syntrophin (stn-1) to form the DGC. Interacts (via C-terminus) with ctn-1 (via N-terminus); the interaction is required for localization of the dystrophin complex and ctn-1 near dense bodies in muscle cells. From late embryogenesis to adulthood, expressed in neurons and muscles; particularly strong in the ventral nerve cord and in muscles of the body wall, head pharyngeal, and vulva; weaker in the intestinal muscle (at protein level).

The protein localises to the cytoplasm. Functionally, plays a role in cholinergic transmission and as a functional partner of dystrophin (dys-1), necessary for muscle maintenance. Required for localization of ctn-1 near dense bodies in muscle cells. The chain is Dystrobrevin-1 from Caenorhabditis elegans.